The primary structure comprises 87 residues: Protein anon-73B1 (87 aa).

Residues 25-47 form a helical membrane-spanning segment; that stretch reads LLIRYGLYVGALFQFVCISAAVL. Residues 52–87 form a disordered region; the sequence is PDVNSNPETGEVTEREGEPVRTRLHKIRKLEKKKRR. The span at 63-72 shows a compositional bias: basic and acidic residues; sequence VTEREGEPVR. Residues 73–87 show a composition bias toward basic residues; sequence TRLHKIRKLEKKKRR.

Belongs to the UPF0239 family.

The protein localises to the membrane. In Drosophila erecta (Fruit fly), this protein is Protein anon-73B1.